The primary structure comprises 291 residues: ATP synthase gamma chain (291 aa).

The protein belongs to the ATPase gamma chain family. In terms of assembly, F-type ATPases have 2 components, CF(1) - the catalytic core - and CF(0) - the membrane proton channel. CF(1) has five subunits: alpha(3), beta(3), gamma(1), delta(1), epsilon(1). CF(0) has three main subunits: a, b and c.

The protein resides in the cell inner membrane. Functionally, produces ATP from ADP in the presence of a proton gradient across the membrane. The gamma chain is believed to be important in regulating ATPase activity and the flow of protons through the CF(0) complex. In Rhodopseudomonas palustris (strain ATCC BAA-98 / CGA009), this protein is ATP synthase gamma chain.